A 79-amino-acid chain; its full sequence is Sulfur carrier protein TusA (79 aa).

Catalysis depends on cysteine 17, which acts as the Cysteine persulfide intermediate.

The protein belongs to the sulfur carrier protein TusA family.

Its subcellular location is the cytoplasm. Functionally, sulfur carrier protein which probably makes part of a sulfur-relay system. The chain is Sulfur carrier protein TusA from Histophilus somni (strain 129Pt) (Haemophilus somnus).